The primary structure comprises 270 residues: ATP synthase subunit a (270 aa).

Helical transmembrane passes span 27–47 (FWTF…VFIL), 90–110 (IAPL…MDLI), 147–166 (VNMT…FYSV), 182–202 (PFNT…SLIA), 211–231 (LFGN…TLGV), and 238–258 (FLWA…FMML).

This sequence belongs to the ATPase A chain family. In terms of assembly, F-type ATPases have 2 components, CF(1) - the catalytic core - and CF(0) - the membrane proton channel. CF(1) has five subunits: alpha(3), beta(3), gamma(1), delta(1), epsilon(1). CF(0) has three main subunits: a(1), b(2) and c(9-12). The alpha and beta chains form an alternating ring which encloses part of the gamma chain. CF(1) is attached to CF(0) by a central stalk formed by the gamma and epsilon chains, while a peripheral stalk is formed by the delta and b chains.

The protein resides in the cell inner membrane. Functionally, key component of the proton channel; it plays a direct role in the translocation of protons across the membrane. This chain is ATP synthase subunit a, found in Pseudoalteromonas atlantica (strain T6c / ATCC BAA-1087).